The following is a 109-amino-acid chain: Hainantoxin-XVIII-2 (109 aa).

A signal peptide spans 1–18; sequence MKLSIIIIATSLVIAVVA. Residues 19–46 constitute a propeptide that is removed on maturation; that stretch reads FPSKDSKAIENDKTEQRMEIVVQETARA. 3 cysteine pairs are disulfide-bonded: Cys-47-Cys-62, Cys-59-Cys-108, and Cys-61-Cys-81.

It belongs to the neurotoxin 25 family. F7 subfamily. In terms of tissue distribution, expressed by the venom gland.

The protein localises to the secreted. Putative ion channel inhibitor. This is Hainantoxin-XVIII-2 from Cyriopagopus hainanus (Chinese bird spider).